The sequence spans 280 residues: Probable inactive shikimate kinase like 1, chloroplastic (280 aa).

The transit peptide at 1 to 54 directs the protein to the chloroplast; that stretch reads MEIFSASASLTLTGFVPRLLPLLSPQARTTLCKPLLSSSSTRLISCHSRIAPSR.

This sequence belongs to the shikimate kinase family.

The protein localises to the plastid. Its subcellular location is the chloroplast. Functionally, required for chloroplast biogenesis. The protein is Probable inactive shikimate kinase like 1, chloroplastic (SKL1) of Arabidopsis thaliana (Mouse-ear cress).